Consider the following 858-residue polypeptide: Bifunctional uridylyltransferase/uridylyl-removing enzyme (858 aa).

The uridylyltransferase stretch occupies residues 1–318; sequence MNPTDLHPIK…FPRPESDARA (318 aa). The uridylyl-removing stretch occupies residues 319 to 674; that stretch reads IDEEFRSLHG…VRPTEEGSGL (356 aa). The HD domain occupies 437–559; it reads VDQHTLAVIR…VKDERHLNAL (123 aa). ACT domains follow at residues 675–756 and 789–858; these read QIMV…LADV and RLSV…LAGE.

This sequence belongs to the GlnD family. Requires Mg(2+) as cofactor.

It catalyses the reaction [protein-PII]-L-tyrosine + UTP = [protein-PII]-uridylyl-L-tyrosine + diphosphate. The catalysed reaction is [protein-PII]-uridylyl-L-tyrosine + H2O = [protein-PII]-L-tyrosine + UMP + H(+). With respect to regulation, uridylyltransferase (UTase) activity is inhibited by glutamine, while glutamine activates uridylyl-removing (UR) activity. Its function is as follows. Modifies, by uridylylation and deuridylylation, the PII regulatory proteins (GlnB and homologs), in response to the nitrogen status of the cell that GlnD senses through the glutamine level. Under low glutamine levels, catalyzes the conversion of the PII proteins and UTP to PII-UMP and PPi, while under higher glutamine levels, GlnD hydrolyzes PII-UMP to PII and UMP (deuridylylation). Thus, controls uridylylation state and activity of the PII proteins, and plays an important role in the regulation of nitrogen assimilation and metabolism. This Bordetella avium (strain 197N) protein is Bifunctional uridylyltransferase/uridylyl-removing enzyme.